A 203-amino-acid polypeptide reads, in one-letter code: DNA-binding transcriptional repressor ScoC (203 aa).

One can recognise an HTH marR-type domain in the interval 13-157; that stretch reads ALVFTQKMAQ…MMCMIRHIYG (145 aa). The segment at residues 63–86 is a DNA-binding region (H-T-H motif); that stretch reads ISEIAKFGVMHVSTAFNFSKKLEE. A disordered region spans residues 183 to 203; the sequence is KKKAKDSAADEPAEELEPVNS. Residues 191-203 are compositionally biased toward acidic residues; that stretch reads ADEPAEELEPVNS.

In terms of assembly, homodimer. Interacts with SinR.

Functionally, negative regulator of protease production and sporulation. Acts by binding directly to the promoter of protease genes (aprE and nprE), and by repressing oligopeptide permease operons (appABCDF and oppABCDF), thereby preventing uptake of oligopeptides required for initiation of sporulation. Acts with SinR as a corepressor of epr expression. Binds to non-m6A-5-methylated 5'-GACGAG-3' sites, tested with scpA; when the target is methylated by DnmA, this repressor no longer binds and transcription is up-regulated. This chain is DNA-binding transcriptional repressor ScoC, found in Bacillus subtilis (strain 168).